The primary structure comprises 198 residues: Large ribosomal subunit protein bL25 (198 aa).

It belongs to the bacterial ribosomal protein bL25 family. CTC subfamily. In terms of assembly, part of the 50S ribosomal subunit; part of the 5S rRNA/L5/L18/L25 subcomplex. Contacts the 5S rRNA. Binds to the 5S rRNA independently of L5 and L18.

This is one of the proteins that binds to the 5S RNA in the ribosome where it forms part of the central protuberance. The protein is Large ribosomal subunit protein bL25 of Chlorobium phaeobacteroides (strain DSM 266 / SMG 266 / 2430).